Consider the following 124-residue polypeptide: Orexigenic neuropeptide QRFP (124 aa).

The N-terminal stretch at 1 to 17 (MRCLCSWLCLLLPLSAC) is a signal peptide. A propeptide spanning residues 18-79 (FPLLDRRGPT…REHTGFRLGR (62 aa)) is cleaved from the precursor. The interval 63 to 100 (KEQQASRREHTGFRLGRQDSGSEATGFLPTDSEKASGP) is disordered. At Gln80 the chain carries Pyrrolidone carboxylic acid. The residue at position 122 (Phe122) is a Phenylalanine amide.

This sequence belongs to the RFamide neuropeptide family. Ligand for the G-protein coupled receptor QRFPR/GPR103. In terms of tissue distribution, expressed in the brain with highest expression levels in the hypothalamus and optic nerve. Also expressed in the trachea and mammary gland.

The protein resides in the secreted. Its function is as follows. Stimulates feeding and grooming behavior, metabolic rate and locomotor activity and increases blood pressure. May have orexigenic activity. May promote aldosterone secretion by the adrenal gland. The protein is Orexigenic neuropeptide QRFP (Qrfp) of Rattus norvegicus (Rat).